A 119-amino-acid chain; its full sequence is Small ribosomal subunit protein uS10 (119 aa).

N-acetylalanine is present on Ala2. Lys4 participates in a covalent cross-link: Glycyl lysine isopeptide (Lys-Gly) (interchain with G-Cter in ubiquitin). The residue at position 8 (Lys8) is an N6-succinyllysine; alternate. Residue Lys8 forms a Glycyl lysine isopeptide (Lys-Gly) (interchain with G-Cter in ubiquitin); alternate linkage. Thr9 is modified (phosphothreonine). N6-acetyllysine occurs at positions 34 and 75. Residue Ser93 is modified to Phosphoserine.

It belongs to the universal ribosomal protein uS10 family. As to quaternary structure, component of the 40S small ribosomal subunit. Polyubiquitinated by ZNF598 via 'Lys-63'-linked ubiquitin chains when a ribosome has stalled, initiating the ribosome quality control (RQC) pathway to degrade the potentially detrimental aberrant nascent polypeptide. Deubiquitinated by OTUD3 and USP21, antagonizing ZNF598 activity. Post-translationally, ufmylated by UFL1.

It localises to the cytoplasm. Its function is as follows. Component of the small ribosomal subunit. The ribosome is a large ribonucleoprotein complex responsible for the synthesis of proteins in the cell. The chain is Small ribosomal subunit protein uS10 (Rps20) from Rattus norvegicus (Rat).